Reading from the N-terminus, the 321-residue chain is Probable DNA polymerase III subunit delta (321 aa).

Belongs to the DNA polymerase HolA subunit family. As to quaternary structure, component of the DNA clamp loading complex consisting of tau(3):delta(1):delta'(1). The DNA polymerase III holoenzyme complex contains at least 10 different subunits organized into 3 functionally essential subassemblies: the Pol III core, the beta sliding clamp processivity factor and the clamp-loading complex. The Pol III core (subunits alpha, epsilon and theta) contains the polymerase and the 3'-5' exonuclease proofreading activities. The polymerase is tethered to the template via the dimeric beta sliding clamp processivity factor. The DNA clamp-loading complex assembles the beta sliding clamp onto the primed template and plays a central role in the organization and communication at the replication fork.

It carries out the reaction DNA(n) + a 2'-deoxyribonucleoside 5'-triphosphate = DNA(n+1) + diphosphate. Functionally, part of the beta sliding clamp loading complex, which hydrolyzes ATP to load the beta clamp onto primed DNA to form the DNA replication pre-initiation complex. DNA polymerase III is a complex, multichain enzyme responsible for most of the replicative synthesis in bacteria. This DNA polymerase also exhibits 3'-5' exonuclease activity. The delta subunit is the wrench that will open the beta subunit dimer. The DNA clamp loading complex (tau(3),delta,delta') is thought to load beta dimers onto DNA by binding ATP which alters the complex's conformation so it can bind beta sliding clamp dimers and open them at one interface. Primed DNA is recognized, ATP is hydrolyzed releasing the clamp loading complex and closing the beta sliding clamp ring around the primed DNA. In Rickettsia prowazekii (strain Madrid E), this protein is Probable DNA polymerase III subunit delta.